A 701-amino-acid chain; its full sequence is Elongation factor G (701 aa).

In terms of domain architecture, tr-type G spans 8–291 (GRYRNIGIVA…AVIDYLPAPT (284 aa)). GTP-binding positions include 17 to 24 (AHVDAGKT), 89 to 93 (DTPGH), and 143 to 146 (NKMD).

The protein belongs to the TRAFAC class translation factor GTPase superfamily. Classic translation factor GTPase family. EF-G/EF-2 subfamily.

It localises to the cytoplasm. Functionally, catalyzes the GTP-dependent ribosomal translocation step during translation elongation. During this step, the ribosome changes from the pre-translocational (PRE) to the post-translocational (POST) state as the newly formed A-site-bound peptidyl-tRNA and P-site-bound deacylated tRNA move to the P and E sites, respectively. Catalyzes the coordinated movement of the two tRNA molecules, the mRNA and conformational changes in the ribosome. The sequence is that of Elongation factor G from Pseudomonas savastanoi pv. phaseolicola (strain 1448A / Race 6) (Pseudomonas syringae pv. phaseolicola (strain 1448A / Race 6)).